Here is a 268-residue protein sequence, read N- to C-terminus: 4-hydroxy-tetrahydrodipicolinate reductase (268 aa).

An NAD(+)-binding site is contributed by 7–12; it reads GANGRM. Residue Arg-34 participates in NADP(+) binding. Residues 97-99 and 121-124 contribute to the NAD(+) site; these read GTT and SENM. His-155 serves as the catalytic Proton donor/acceptor. His-156 contributes to the (S)-2,3,4,5-tetrahydrodipicolinate binding site. Catalysis depends on Lys-159, which acts as the Proton donor. 165–166 contributes to the (S)-2,3,4,5-tetrahydrodipicolinate binding site; that stretch reads GT.

This sequence belongs to the DapB family.

The protein resides in the cytoplasm. The catalysed reaction is (S)-2,3,4,5-tetrahydrodipicolinate + NAD(+) + H2O = (2S,4S)-4-hydroxy-2,3,4,5-tetrahydrodipicolinate + NADH + H(+). It carries out the reaction (S)-2,3,4,5-tetrahydrodipicolinate + NADP(+) + H2O = (2S,4S)-4-hydroxy-2,3,4,5-tetrahydrodipicolinate + NADPH + H(+). It functions in the pathway amino-acid biosynthesis; L-lysine biosynthesis via DAP pathway; (S)-tetrahydrodipicolinate from L-aspartate: step 4/4. Its function is as follows. Catalyzes the conversion of 4-hydroxy-tetrahydrodipicolinate (HTPA) to tetrahydrodipicolinate. The protein is 4-hydroxy-tetrahydrodipicolinate reductase of Bartonella bacilliformis (strain ATCC 35685 / KC583 / Herrer 020/F12,63).